Here is a 157-residue protein sequence, read N- to C-terminus: Probable succinate transporter subunit YjjB (157 aa).

4 helical membrane-spanning segments follow: residues 8–28 (LALA…AMVF), 50–70 (MILM…SMLV), 87–107 (VFTV…TAMI), and 129–149 (FLTA…PGLW).

It belongs to the ThrE exporter (TC 2.A.79) family. In terms of assembly, the transporter is composed of YjjB and YjjP.

The protein localises to the cell inner membrane. Its function is as follows. Involved in succinate export with YjjP. Both proteins are required for export. The chain is Probable succinate transporter subunit YjjB from Escherichia coli O127:H6 (strain E2348/69 / EPEC).